The following is a 155-amino-acid chain: Transcriptional repressor NrdR (155 aa).

Residues 3 to 34 fold into a zinc finger; that stretch reads CPFCGNIDTQVKDSRPAEDHVSIRRRRFCPAC. An ATP-cone domain is found at 49-139; the sequence is LVVIKSSGKR…VYKNFQAADD (91 aa).

Belongs to the NrdR family. The cofactor is Zn(2+).

Functionally, negatively regulates transcription of bacterial ribonucleotide reductase nrd genes and operons by binding to NrdR-boxes. The chain is Transcriptional repressor NrdR from Cereibacter sphaeroides (strain ATCC 17025 / ATH 2.4.3) (Rhodobacter sphaeroides).